Reading from the N-terminus, the 286-residue chain is Rhomboid-type serine protease 2 (286 aa).

A run of 6 helical transmembrane segments spans residues 18–38 (ITQYPALTVGLSVFTFLLLVI), 66–86 (SFYLLFHRGFTHWLLNVVGLF), 99–119 (VFTGVTLNVLAVTAGLQFCIV), 122–142 (LLYPNTQVIGLSGVVFSFMSF), 164–183 (VSIPTLYSPFIFLIVCMVLI), and 188–210 (FWGHLAGISSGYLLALGYIKFLY). Ser-133 serves as the catalytic Nucleophile. Residue His-191 is part of the active site.

Belongs to the peptidase S54 family.

It is found in the golgi apparatus membrane. The protein resides in the golgi apparatus. The protein localises to the cis-Golgi network membrane. The catalysed reaction is Cleaves type-1 transmembrane domains using a catalytic dyad composed of serine and histidine that are contributed by different transmembrane domains.. Probable rhomboid-type serine protease that catalyzes intramembrane proteolysis. This chain is Rhomboid-type serine protease 2 (RBD2), found in Debaryomyces hansenii (strain ATCC 36239 / CBS 767 / BCRC 21394 / JCM 1990 / NBRC 0083 / IGC 2968) (Yeast).